The primary structure comprises 72 residues: MAFLKKSLFLVLFLGLVSLSICEKEKRQNEEDEDENEAANHEEGSEEKRGLFDIVKKVVGAFGSLGKRNDLE.

The first 22 residues, 1–22 (MAFLKKSLFLVLFLGLVSLSIC), serve as a signal peptide directing secretion. A propeptide spanning residues 23 to 49 (EKEKRQNEEDEDENEAANHEEGSEEKR) is cleaved from the precursor. A disordered region spans residues 27–47 (RQNEEDEDENEAANHEEGSEE). The span at 38–47 (AANHEEGSEE) shows a compositional bias: basic and acidic residues. The residue at position 65 (leucine 65) is a Leucine amide. A propeptide spanning residues 69–72 (NDLE) is cleaved from the precursor.

Belongs to the frog skin active peptide (FSAP) family. Aurein subfamily. In terms of assembly, may be monomeric or may oligomerize as homodimers or homotrimers in Gram-positive and Gram-negative bacteria mimetic membranes. Post-translationally, C-terminal amidation enhances antibacterial activity. This increase may be due to stabilization of the alpha-helical structure at the membrane interface. In terms of tissue distribution, expressed by the skin dorsal glands.

It is found in the secreted. The protein resides in the target cell membrane. In terms of biological role, amphipathic alpha-helical antimicrobial peptide with moderate to potent activity against Gram-positive bacteria, Gram-negative bacteria and fungi. Also shows a weak activity against biofilm of both Gram-positive and Gram-negative bacteria. Probably acts by disturbing membrane functions with its amphipathic structure. Kills fungi via membranolytic action. Enhanced sterol levels in lipid composition membranes reduce interaction of this peptide with membranes, having a protective effect against the lytic ability of the peptide. Shows anticancer activity. In Ranoidea aurea (Green and golden bell frog), this protein is Aurein-2.5.